Reading from the N-terminus, the 872-residue chain is UPF0182 protein Noc_0961 (872 aa).

The next 7 helical transmembrane spans lie at 8–28 (FLIL…AGFE), 56–76 (LVVF…NFWV), 109–129 (SLWI…WPLF), 159–179 (LFSF…FLLL), 207–227 (WHLS…FFLQ), 254–274 (PFIW…LLFI), and 282–302 (TLAV…FHFL).

The protein belongs to the UPF0182 family.

The protein localises to the cell membrane. The protein is UPF0182 protein Noc_0961 of Nitrosococcus oceani (strain ATCC 19707 / BCRC 17464 / JCM 30415 / NCIMB 11848 / C-107).